The following is a 198-amino-acid chain: ATP-dependent Clp protease proteolytic subunit 1 (198 aa).

Serine 98 (nucleophile) is an active-site residue. Histidine 123 is an active-site residue.

Belongs to the peptidase S14 family. Fourteen ClpP subunits assemble into 2 heptameric rings which stack back to back to give a disk-like structure with a central cavity, resembling the structure of eukaryotic proteasomes.

Its subcellular location is the cytoplasm. It carries out the reaction Hydrolysis of proteins to small peptides in the presence of ATP and magnesium. alpha-casein is the usual test substrate. In the absence of ATP, only oligopeptides shorter than five residues are hydrolyzed (such as succinyl-Leu-Tyr-|-NHMec, and Leu-Tyr-Leu-|-Tyr-Trp, in which cleavage of the -Tyr-|-Leu- and -Tyr-|-Trp bonds also occurs).. Cleaves peptides in various proteins in a process that requires ATP hydrolysis. Has a chymotrypsin-like activity. Plays a major role in the degradation of misfolded proteins. In Leptospira interrogans serogroup Icterohaemorrhagiae serovar copenhageni (strain Fiocruz L1-130), this protein is ATP-dependent Clp protease proteolytic subunit 1.